Here is a 201-residue protein sequence, read N- to C-terminus: Peptidyl-tRNA hydrolase (201 aa).

Residue Tyr-14 participates in tRNA binding. Catalysis depends on His-19, which acts as the Proton acceptor. 3 residues coordinate tRNA: Tyr-64, Asn-66, and Asn-113. Positions 178 to 201 (PGPAMNRFNRKPEPPESGGEVAAK) are disordered.

It belongs to the PTH family. As to quaternary structure, monomer.

Its subcellular location is the cytoplasm. It catalyses the reaction an N-acyl-L-alpha-aminoacyl-tRNA + H2O = an N-acyl-L-amino acid + a tRNA + H(+). Its function is as follows. Hydrolyzes ribosome-free peptidyl-tRNAs (with 1 or more amino acids incorporated), which drop off the ribosome during protein synthesis, or as a result of ribosome stalling. Catalyzes the release of premature peptidyl moieties from peptidyl-tRNA molecules trapped in stalled 50S ribosomal subunits, and thus maintains levels of free tRNAs and 50S ribosomes. The protein is Peptidyl-tRNA hydrolase of Koribacter versatilis (strain Ellin345).